We begin with the raw amino-acid sequence, 218 residues long: Enhancer of split M2 protein (218 aa).

Over residues 1-25 the composition is skewed to low complexity; that stretch reads MYLDTKNLTASSTSALTAATASNSK. Disordered regions lie at residues 1-30, 64-86, and 137-164; these read MYLDTKNLTASSTSALTAATASNSKSTRRM, NTQQQQQQQQQELLIEDDTKSTP, and GRNCQHRHHSSSNINSSSSSSNMNSSSA. Low complexity predominate over residues 147 to 163; the sequence is SSNINSSSSSSNMNSSS.

Part of the Notch signaling pathway. The protein is Enhancer of split M2 protein of Drosophila melanogaster (Fruit fly).